The sequence spans 224 residues: Thiamine-phosphate synthase (224 aa).

4-amino-2-methyl-5-(diphosphooxymethyl)pyrimidine is bound by residues 43 to 47 (QYRPK) and N75. Mg(2+) is bound by residues D76 and D95. Residue S114 coordinates 4-amino-2-methyl-5-(diphosphooxymethyl)pyrimidine. 141-143 (SAT) contacts 2-[(2R,5Z)-2-carboxy-4-methylthiazol-5(2H)-ylidene]ethyl phosphate. K144 contributes to the 4-amino-2-methyl-5-(diphosphooxymethyl)pyrimidine binding site. G171 provides a ligand contact to 2-[(2R,5Z)-2-carboxy-4-methylthiazol-5(2H)-ylidene]ethyl phosphate.

It belongs to the thiamine-phosphate synthase family. Requires Mg(2+) as cofactor.

The catalysed reaction is 2-[(2R,5Z)-2-carboxy-4-methylthiazol-5(2H)-ylidene]ethyl phosphate + 4-amino-2-methyl-5-(diphosphooxymethyl)pyrimidine + 2 H(+) = thiamine phosphate + CO2 + diphosphate. The enzyme catalyses 2-(2-carboxy-4-methylthiazol-5-yl)ethyl phosphate + 4-amino-2-methyl-5-(diphosphooxymethyl)pyrimidine + 2 H(+) = thiamine phosphate + CO2 + diphosphate. It catalyses the reaction 4-methyl-5-(2-phosphooxyethyl)-thiazole + 4-amino-2-methyl-5-(diphosphooxymethyl)pyrimidine + H(+) = thiamine phosphate + diphosphate. It functions in the pathway cofactor biosynthesis; thiamine diphosphate biosynthesis; thiamine phosphate from 4-amino-2-methyl-5-diphosphomethylpyrimidine and 4-methyl-5-(2-phosphoethyl)-thiazole: step 1/1. In terms of biological role, condenses 4-methyl-5-(beta-hydroxyethyl)thiazole monophosphate (THZ-P) and 2-methyl-4-amino-5-hydroxymethyl pyrimidine pyrophosphate (HMP-PP) to form thiamine monophosphate (TMP). This is Thiamine-phosphate synthase from Methylococcus capsulatus (strain ATCC 33009 / NCIMB 11132 / Bath).